The primary structure comprises 248 residues: 14-3-3-like protein 2 (248 aa).

The protein belongs to the 14-3-3 family. In terms of assembly, interacts with daf-16. Interacts with sir-2.1. Interacts with hcf-1.

Its subcellular location is the cytoplasm. The protein resides in the nucleus. Its function is as follows. Required for extension of lifespan by sir-2.1. Required to modulate lifespan, in concert with hcf-1, acting redundantly with 14-3-3-like protein par-5. Promotes nuclear export of yap-1. Negatively regulates the transcriptional activity of daf-16 by sequestering it to the cytoplasm. The sequence is that of 14-3-3-like protein 2 from Caenorhabditis elegans.